Here is a 433-residue protein sequence, read N- to C-terminus: Pyrimidine-nucleoside phosphorylase (433 aa).

81-83 is a binding site for phosphate; it reads KHS. The K(+) site is built by Gly-88 and Thr-90. Residues Thr-92, 108 to 110, and Thr-120 each bind phosphate; that span reads KMS. Residues Arg-168 and Lys-187 each contribute to the substrate site. Residues Leu-243, Ala-246, and Glu-255 each coordinate K(+).

Belongs to the thymidine/pyrimidine-nucleoside phosphorylase family. Homodimer. It depends on K(+) as a cofactor.

It catalyses the reaction uridine + phosphate = alpha-D-ribose 1-phosphate + uracil. It carries out the reaction thymidine + phosphate = 2-deoxy-alpha-D-ribose 1-phosphate + thymine. The catalysed reaction is 2'-deoxyuridine + phosphate = 2-deoxy-alpha-D-ribose 1-phosphate + uracil. Functionally, catalyzes phosphorolysis of the pyrimidine nucleosides uridine, thymidine and 2'-deoxyuridine with the formation of the corresponding pyrimidine base and ribose-1-phosphate. The protein is Pyrimidine-nucleoside phosphorylase of Bacillus subtilis (strain 168).